The following is a 253-amino-acid chain: Ubiquinone/menaquinone biosynthesis C-methyltransferase UbiE (253 aa).

S-adenosyl-L-methionine contacts are provided by residues Thr76, Asp97, and 125–126; that span reads NA.

It belongs to the class I-like SAM-binding methyltransferase superfamily. MenG/UbiE family.

It catalyses the reaction a 2-demethylmenaquinol + S-adenosyl-L-methionine = a menaquinol + S-adenosyl-L-homocysteine + H(+). It carries out the reaction a 2-methoxy-6-(all-trans-polyprenyl)benzene-1,4-diol + S-adenosyl-L-methionine = a 5-methoxy-2-methyl-3-(all-trans-polyprenyl)benzene-1,4-diol + S-adenosyl-L-homocysteine + H(+). The protein operates within quinol/quinone metabolism; menaquinone biosynthesis; menaquinol from 1,4-dihydroxy-2-naphthoate: step 2/2. It participates in cofactor biosynthesis; ubiquinone biosynthesis. In terms of biological role, methyltransferase required for the conversion of demethylmenaquinol (DMKH2) to menaquinol (MKH2) and the conversion of 2-polyprenyl-6-methoxy-1,4-benzoquinol (DDMQH2) to 2-polyprenyl-3-methyl-6-methoxy-1,4-benzoquinol (DMQH2). The chain is Ubiquinone/menaquinone biosynthesis C-methyltransferase UbiE from Stenotrophomonas maltophilia (strain K279a).